A 181-amino-acid polypeptide reads, in one-letter code: Segregation and condensation protein B (181 aa).

It belongs to the ScpB family. Homodimer. Homodimerization may be required to stabilize the binding of ScpA to the Smc head domains. Component of a cohesin-like complex composed of ScpA, ScpB and the Smc homodimer, in which ScpA and ScpB bind to the head domain of Smc. The presence of the three proteins is required for the association of the complex with DNA.

The protein resides in the cytoplasm. Functionally, participates in chromosomal partition during cell division. May act via the formation of a condensin-like complex containing Smc and ScpA that pull DNA away from mid-cell into both cell halves. The chain is Segregation and condensation protein B from Desulforamulus reducens (strain ATCC BAA-1160 / DSM 100696 / MI-1) (Desulfotomaculum reducens).